We begin with the raw amino-acid sequence, 607 residues long: CRS2-associated factor 2, chloroplastic (607 aa).

Residues 1–75 (MSPPPPQRPS…GNGGNPAFRA (75 aa)) form a disordered region. The N-terminal 79 residues, 1–79 (MSPPPPQRPS…NPAFRAPHLR (79 aa)), are a transit peptide targeting the chloroplast. 2 CRM domains span residues 228 to 324 (EPLT…TRPR) and 346 to 442 (EGLT…YPKP). A CRS2 binding region spans residues 482–505 (KMFELWTNAIESSVALMLDDAEVD). The tract at residues 550 to 576 (TEDEPETGTLEPQQHEFTESSDVAEDD) is disordered.

As to quaternary structure, interacts with CRS2 and RNA. Part of large ribonucleo-protein complexes that include group IIB introns, CRS2 and CAF2.

The protein localises to the plastid. The protein resides in the chloroplast stroma. Functionally, required for the splicing of group IIB introns in chloroplasts. Forms splicing particles with CRS2. Interacts with RNA and confers intron specificity of the splicing particles. The sequence is that of CRS2-associated factor 2, chloroplastic from Oryza sativa subsp. japonica (Rice).